The following is a 505-amino-acid chain: ATP synthase subunit alpha (505 aa).

170-177 (GDRQTGKS) provides a ligand contact to ATP.

This sequence belongs to the ATPase alpha/beta chains family. In terms of assembly, F-type ATPases have 2 components, CF(1) - the catalytic core - and CF(0) - the membrane proton channel. CF(1) has five subunits: alpha(3), beta(3), gamma(1), delta(1), epsilon(1). CF(0) has four main subunits: a(1), b(1), b'(1) and c(9-12).

Its subcellular location is the cellular thylakoid membrane. It catalyses the reaction ATP + H2O + 4 H(+)(in) = ADP + phosphate + 5 H(+)(out). In terms of biological role, produces ATP from ADP in the presence of a proton gradient across the membrane. The alpha chain is a regulatory subunit. The chain is ATP synthase subunit alpha from Prochlorococcus marinus (strain AS9601).